A 226-amino-acid polypeptide reads, in one-letter code: Cytidylate kinase (226 aa).

10–18 contributes to the ATP binding site; it reads GPAGAGKST.

The protein belongs to the cytidylate kinase family. Type 1 subfamily.

The protein resides in the cytoplasm. It carries out the reaction CMP + ATP = CDP + ADP. The enzyme catalyses dCMP + ATP = dCDP + ADP. The protein is Cytidylate kinase of Caldicellulosiruptor bescii (strain ATCC BAA-1888 / DSM 6725 / KCTC 15123 / Z-1320) (Anaerocellum thermophilum).